The following is a 436-amino-acid chain: UPF0597 protein YhaM (436 aa).

It belongs to the UPF0597 family.

The protein is UPF0597 protein YhaM of Shigella flexneri serotype 5b (strain 8401).